A 2298-amino-acid polypeptide reads, in one-letter code: Protein Ycf2 (2298 aa).

1640-1647 (GSIGTGRS) is a binding site for ATP.

This sequence belongs to the Ycf2 family.

It localises to the plastid. The protein resides in the chloroplast stroma. Its function is as follows. Probable ATPase of unknown function. Its presence in a non-photosynthetic plant (Epifagus virginiana) and experiments in tobacco indicate that it has an essential function which is probably not related to photosynthesis. This Carica papaya (Papaya) protein is Protein Ycf2.